Consider the following 916-residue polypeptide: Protein translocase subunit SecA (916 aa).

ATP-binding positions include Gln88, 106–110 (GEGKT), and Asp519. 4 residues coordinate Zn(2+): Cys902, Cys904, Cys913, and Cys914.

Belongs to the SecA family. As to quaternary structure, monomer and homodimer. Part of the essential Sec protein translocation apparatus which comprises SecA, SecYEG and auxiliary proteins SecDF. Other proteins may also be involved. The cofactor is Zn(2+).

It localises to the cell inner membrane. It is found in the cytoplasm. It carries out the reaction ATP + H2O + cellular proteinSide 1 = ADP + phosphate + cellular proteinSide 2.. Functionally, part of the Sec protein translocase complex. Interacts with the SecYEG preprotein conducting channel. Has a central role in coupling the hydrolysis of ATP to the transfer of proteins into and across the cell membrane, serving as an ATP-driven molecular motor driving the stepwise translocation of polypeptide chains across the membrane. This chain is Protein translocase subunit SecA, found in Treponema pallidum (strain Nichols).